The following is an 87-amino-acid chain: DNA-directed RNA polymerase subunit omega (87 aa).

Belongs to the RNA polymerase subunit omega family. The RNAP catalytic core consists of 2 alpha, 1 beta, 1 beta' and 1 omega subunit. When a sigma factor is associated with the core the holoenzyme is formed, which can initiate transcription.

The enzyme catalyses RNA(n) + a ribonucleoside 5'-triphosphate = RNA(n+1) + diphosphate. Functionally, promotes RNA polymerase assembly. Latches the N- and C-terminal regions of the beta' subunit thereby facilitating its interaction with the beta and alpha subunits. The chain is DNA-directed RNA polymerase subunit omega from Leifsonia xyli subsp. xyli (strain CTCB07).